The primary structure comprises 264 residues: Virulence plasmid protein pGP3-D (264 aa).

The protein is Virulence plasmid protein pGP3-D of Chlamydia muridarum (strain MoPn / Nigg).